Here is a 47-residue protein sequence, read N- to C-terminus: Diuretic hormone 2 (47 aa).

It belongs to the sauvagine/corticotropin-releasing factor/urotensin I family.

It is found in the secreted. Stimulates fluid secretion by the Malpighian tubules. Increases cyclic AMP production in Malpighian tubules. The sequence is that of Diuretic hormone 2 from Tenebrio molitor (Yellow mealworm beetle).